A 291-amino-acid polypeptide reads, in one-letter code: Pituitary-specific positive transcription factor 1 (291 aa).

The short motif at 5-13 is the 9aaTAD element; the sequence is AFTSADTFI. Positions 124 to 198 constitute a POU-specific domain; the sequence is MDSPEIRELE…ILSKWLEEAE (75 aa). Positions 214 to 273 form a DNA-binding region, homeobox; sequence KRKRRTTISIAAKDALERHFGEQNKPSSQEIMRMAEELNLEKEVVRVWFCNRRQREKRVK.

This sequence belongs to the POU transcription factor family. Class-1 subfamily. In terms of assembly, interacts with PITX1. Interacts with LHX3. Interacts with ELK1.

It is found in the nucleus. Transcription factor involved in the specification of the lactotrope, somatotrope, and thyrotrope phenotypes in the developing anterior pituitary. Activates growth hormone and prolactin genes. Specifically binds to the consensus sequence 5'-TAAAT-3'. The chain is Pituitary-specific positive transcription factor 1 (POU1F1) from Macaca mulatta (Rhesus macaque).